The chain runs to 167 residues: Translationally-controlled tumor protein homolog (167 aa).

Residues 1-167 (MLIFEDVISG…WKHGVKENKI (167 aa)) form the TCTP domain.

Belongs to the TCTP family.

It is found in the cytoplasm. The protein localises to the cytoskeleton. Functionally, involved in protein synthesis. Involved in microtubule stabilization. The chain is Translationally-controlled tumor protein homolog (TMA19) from Candida albicans (strain SC5314 / ATCC MYA-2876) (Yeast).